The sequence spans 193 residues: Peptidyl-tRNA hydrolase (193 aa).

Position 17 (Tyr17) interacts with tRNA. The active-site Proton acceptor is His22. TRNA contacts are provided by Phe68, Asn70, and Asn115.

Belongs to the PTH family. In terms of assembly, monomer.

The protein resides in the cytoplasm. It catalyses the reaction an N-acyl-L-alpha-aminoacyl-tRNA + H2O = an N-acyl-L-amino acid + a tRNA + H(+). Its function is as follows. Hydrolyzes ribosome-free peptidyl-tRNAs (with 1 or more amino acids incorporated), which drop off the ribosome during protein synthesis, or as a result of ribosome stalling. Catalyzes the release of premature peptidyl moieties from peptidyl-tRNA molecules trapped in stalled 50S ribosomal subunits, and thus maintains levels of free tRNAs and 50S ribosomes. The sequence is that of Peptidyl-tRNA hydrolase from Alteromonas mediterranea (strain DSM 17117 / CIP 110805 / LMG 28347 / Deep ecotype).